The sequence spans 757 residues: Elongation factor G, mitochondrial (757 aa).

The N-terminal 41 residues, 1–41 (MLERAALLHRLRLPAHSLPFIYNGALFGGAKRSFSATSKRC), are a transit peptide targeting the mitochondrion. Positions 66–347 (KLLRNIGVSA…AIVDYLPEPS (282 aa)) constitute a tr-type G domain. GTP contacts are provided by residues 75-82 (AHIDSGKT), 146-150 (DTPGH), and 200-203 (NKMD).

It belongs to the TRAFAC class translation factor GTPase superfamily. Classic translation factor GTPase family. EF-G/EF-2 subfamily.

It localises to the mitochondrion. It participates in protein biosynthesis; polypeptide chain elongation. Its function is as follows. Mitochondrial GTPase that catalyzes the GTP-dependent ribosomal translocation step during translation elongation. During this step, the ribosome changes from the pre-translocational (PRE) to the post-translocational (POST) state as the newly formed A-site-bound peptidyl-tRNA and P-site-bound deacylated tRNA move to the P and E sites, respectively. Catalyzes the coordinated movement of the two tRNA molecules, the mRNA and conformational changes in the ribosome. This is Elongation factor G, mitochondrial from Eremothecium gossypii (strain ATCC 10895 / CBS 109.51 / FGSC 9923 / NRRL Y-1056) (Yeast).